A 546-amino-acid chain; its full sequence is Thermolysin (546 aa).

Positions 1–25 (MDKRAMLGAIGLAFGLMAWPFGASA) are cleaved as a signal peptide. Residues 26 to 228 (KEKSMVWNEQ…EAKPGGGQPV (203 aa)) constitute a propeptide, activation peptide. Ca(2+)-binding residues include aspartate 287, aspartate 289, glutamine 291, and aspartate 368. Histidine 372 lines the Zn(2+) pocket. The active site involves glutamate 373. Zn(2+) is bound by residues histidine 376 and glutamate 396. 8 residues coordinate Ca(2+): asparagine 413, aspartate 415, glutamate 417, glutamate 420, tyrosine 423, threonine 424, isoleucine 427, and aspartate 430. Residue histidine 461 is the Proton donor of the active site.

This sequence belongs to the peptidase M4 family. The cofactor is Ca(2+). It depends on Zn(2+) as a cofactor.

The protein resides in the secreted. The enzyme catalyses Preferential cleavage: Xaa-|-Leu &gt; Xaa-|-Phe.. Extracellular zinc metalloprotease. The sequence is that of Thermolysin (npr) from Bacillus caldolyticus.